Reading from the N-terminus, the 143-residue chain is Transcriptional regulator MraZ (143 aa).

SpoVT-AbrB domains lie at 5 to 47 (QYEH…SLEE) and 76 to 119 (AVEC…SKEV).

The protein belongs to the MraZ family. In terms of assembly, forms oligomers.

The protein localises to the cytoplasm. Its subcellular location is the nucleoid. The protein is Transcriptional regulator MraZ of Thermoanaerobacter pseudethanolicus (strain ATCC 33223 / 39E) (Clostridium thermohydrosulfuricum).